The following is a 486-amino-acid chain: Ribulose bisphosphate carboxylase large chain 1 (486 aa).

The substrate site is built by Asn-125 and Thr-175. Residue Lys-177 is the Proton acceptor of the active site. Lys-179 provides a ligand contact to substrate. The Mg(2+) site is built by Lys-203, Asp-205, and Glu-206. Position 203 is an N6-carboxylysine (Lys-203). Catalysis depends on His-295, which acts as the Proton acceptor. Substrate is bound by residues Arg-296, His-328, and Ser-380.

This sequence belongs to the RuBisCO large chain family. Type I subfamily. In terms of assembly, heterohexadecamer of 8 large chains and 8 small chains. It depends on Mg(2+) as a cofactor.

The catalysed reaction is 2 (2R)-3-phosphoglycerate + 2 H(+) = D-ribulose 1,5-bisphosphate + CO2 + H2O. The enzyme catalyses D-ribulose 1,5-bisphosphate + O2 = 2-phosphoglycolate + (2R)-3-phosphoglycerate + 2 H(+). In terms of biological role, ruBisCO catalyzes two reactions: the carboxylation of D-ribulose 1,5-bisphosphate, the primary event in carbon dioxide fixation, as well as the oxidative fragmentation of the pentose substrate. Both reactions occur simultaneously and in competition at the same active site. The chain is Ribulose bisphosphate carboxylase large chain 1 from Cereibacter sphaeroides (strain ATCC 17025 / ATH 2.4.3) (Rhodobacter sphaeroides).